The chain runs to 610 residues: DNA mismatch repair protein MutL (610 aa).

It belongs to the DNA mismatch repair MutL/HexB family.

This protein is involved in the repair of mismatches in DNA. It is required for dam-dependent methyl-directed DNA mismatch repair. May act as a 'molecular matchmaker', a protein that promotes the formation of a stable complex between two or more DNA-binding proteins in an ATP-dependent manner without itself being part of a final effector complex. This is DNA mismatch repair protein MutL from Rickettsia canadensis (strain McKiel).